Consider the following 290-residue polypeptide: 33 kDa chaperonin (290 aa).

Disulfide bonds link Cys-231-Cys-233 and Cys-263-Cys-266.

The protein belongs to the HSP33 family. Post-translationally, under oxidizing conditions two disulfide bonds are formed involving the reactive cysteines. Under reducing conditions zinc is bound to the reactive cysteines and the protein is inactive.

It localises to the cytoplasm. Redox regulated molecular chaperone. Protects both thermally unfolding and oxidatively damaged proteins from irreversible aggregation. Plays an important role in the bacterial defense system toward oxidative stress. The sequence is that of 33 kDa chaperonin from Thermotoga maritima (strain ATCC 43589 / DSM 3109 / JCM 10099 / NBRC 100826 / MSB8).